The sequence spans 466 residues: Trigger factor (466 aa).

Residues 166-245 form the PPIase FKBP-type domain; sequence GDFAQIDLVA…LNAVKERELP (80 aa). Disordered regions lie at residues 313–332 and 424–466; these read LEQE…TESS and LPDD…AADK. Positions 426-444 are enriched in acidic residues; it reads DDGEAVDEDATPEDTDAPA. Basic residues predominate over residues 453-466; the sequence is PKKKAAAKKKAADK.

This sequence belongs to the FKBP-type PPIase family. Tig subfamily.

It localises to the cytoplasm. The enzyme catalyses [protein]-peptidylproline (omega=180) = [protein]-peptidylproline (omega=0). In terms of biological role, involved in protein export. Acts as a chaperone by maintaining the newly synthesized protein in an open conformation. Functions as a peptidyl-prolyl cis-trans isomerase. The chain is Trigger factor from Leifsonia xyli subsp. xyli (strain CTCB07).